The sequence spans 207 residues: Phosphatidylinositol phosphate synthase (207 aa).

A run of 2 helical transmembrane segments spans residues 21–44 (LRAH…MALI) and 50–67 (WLWQ…SDSL). 28–31 (DVVT) contributes to the a CDP-1,2-diacyl-sn-glycerol binding site. Residues D65 and D68 each contribute to the Mg(2+) site. Positions 69, 73, and 79 each coordinate a CDP-1,2-diacyl-sn-glycerol. Residues D86 and D90 each contribute to the Mg(2+) site. A run of 4 helical transmembrane segments spans residues 88–106 (TLDR…LYFA), 112–131 (VLWT…TSYV), 152–170 (RLLV…RVGA), and 176–195 (VVAL…ITVV). Catalysis depends on D90, which acts as the Proton acceptor.

This sequence belongs to the CDP-alcohol phosphatidyltransferase class-I family. In terms of assembly, homodimer. The cofactor is Mg(2+).

It localises to the cell membrane. The catalysed reaction is a CDP-1,2-diacyl-sn-glycerol + 1D-myo-inositol 3-phosphate = a 1,2-diacyl-sn-glycero-3-phospho-(1D-myo-inositol-3-phosphate) + CMP + H(+). It catalyses the reaction 1,2-di-(9Z-octadecenoyl)-sn-glycero-3-cytidine-5'-diphosphate + 1D-myo-inositol 3-phosphate = 1,2-di-(9Z-octadecenoyl)-sn-glycero-3-phospho-(1D-myo-inositol-3-phosphate) + CMP + H(+). It functions in the pathway phospholipid metabolism; phosphatidylinositol phosphate biosynthesis. Functionally, catalyzes the conjugation of the 1'-hydroxyl group of D-myo-inositol-3-phosphate (also named L-myo-inositol-1-phosphate) with a lipid tail of cytidine diphosphate diacylglycerol (CDP-DAG), forming phosphatidylinositol phosphate (PIP) and CMP. PIP is a precursor of phosphatidylinositol (PI) which is an essential lipid required for cell wall formation. The chain is Phosphatidylinositol phosphate synthase from Cutibacterium acnes (strain DSM 16379 / KPA171202) (Propionibacterium acnes).